A 137-amino-acid chain; its full sequence is Protein PsiE homolog (137 aa).

The next 4 membrane-spanning stretches (helical) occupy residues isoleucine 13–isoleucine 35, tyrosine 55–tyrosine 77, phenylalanine 84–valine 103, and serine 107–asparagine 129.

The protein belongs to the PsiE family.

Its subcellular location is the cell membrane. In Listeria monocytogenes serotype 4b (strain F2365), this protein is Protein PsiE homolog.